We begin with the raw amino-acid sequence, 439 residues long: 23S rRNA (uracil(1939)-C(5))-methyltransferase RlmD (439 aa).

Residues 10–69 (KTQLNTRHQAVQVERLDHHGAGIAYLKKKPLFIDGALPGEEVVTQLVEEKSKFARGKLIK) enclose the TRAM domain. 4 residues coordinate [4Fe-4S] cluster: cysteine 82, cysteine 88, cysteine 91, and cysteine 169. Positions 272, 301, 306, 322, 349, and 370 each coordinate S-adenosyl-L-methionine. Cysteine 396 serves as the catalytic Nucleophile.

The protein belongs to the class I-like SAM-binding methyltransferase superfamily. RNA M5U methyltransferase family. RlmD subfamily.

It catalyses the reaction uridine(1939) in 23S rRNA + S-adenosyl-L-methionine = 5-methyluridine(1939) in 23S rRNA + S-adenosyl-L-homocysteine + H(+). Functionally, catalyzes the formation of 5-methyl-uridine at position 1939 (m5U1939) in 23S rRNA. In Vibrio campbellii (strain ATCC BAA-1116), this protein is 23S rRNA (uracil(1939)-C(5))-methyltransferase RlmD.